Reading from the N-terminus, the 88-residue chain is Phage-like element PBSX protein XkdR (88 aa).

To B.subtilis YqbR.

This Bacillus subtilis (strain 168) protein is Phage-like element PBSX protein XkdR (xkdR).